The following is a 210-amino-acid chain: Shikimate kinase (210 aa).

34-39 provides a ligand contact to ATP; it reads GAGKSV. Serine 38 is a Mg(2+) binding site. Residues aspartate 56, arginine 80, and glycine 102 each coordinate substrate. Position 140 (arginine 140) interacts with ATP. Arginine 159 contributes to the substrate binding site.

The protein belongs to the shikimate kinase family. In terms of assembly, monomer. It depends on Mg(2+) as a cofactor.

The protein resides in the cytoplasm. The enzyme catalyses shikimate + ATP = 3-phosphoshikimate + ADP + H(+). Its pathway is metabolic intermediate biosynthesis; chorismate biosynthesis; chorismate from D-erythrose 4-phosphate and phosphoenolpyruvate: step 5/7. Catalyzes the specific phosphorylation of the 3-hydroxyl group of shikimic acid using ATP as a cosubstrate. This is Shikimate kinase from Bartonella quintana (strain Toulouse) (Rochalimaea quintana).